An 81-amino-acid polypeptide reads, in one-letter code: Small ribosomal subunit protein bS18 (81 aa).

This sequence belongs to the bacterial ribosomal protein bS18 family. In terms of assembly, part of the 30S ribosomal subunit. Forms a tight heterodimer with protein bS6.

Functionally, binds as a heterodimer with protein bS6 to the central domain of the 16S rRNA, where it helps stabilize the platform of the 30S subunit. The chain is Small ribosomal subunit protein bS18 from Chlamydia muridarum (strain MoPn / Nigg).